A 156-amino-acid polypeptide reads, in one-letter code: Small ribosomal subunit protein uS7 (156 aa).

It belongs to the universal ribosomal protein uS7 family. Part of the 30S ribosomal subunit. Contacts proteins S9 and S11.

Its function is as follows. One of the primary rRNA binding proteins, it binds directly to 16S rRNA where it nucleates assembly of the head domain of the 30S subunit. Is located at the subunit interface close to the decoding center, probably blocks exit of the E-site tRNA. The chain is Small ribosomal subunit protein uS7 from Gloeobacter violaceus (strain ATCC 29082 / PCC 7421).